Here is an 81-residue protein sequence, read N- to C-terminus: RNA-binding protein KhpA (81 aa).

Residues 34 to 81 (KIALRLSVHKSDTGKVIGKQGRTAKAIRTAVFAAGVQSSKKVQFEIFD) enclose the KH domain.

Belongs to the KhpA RNA-binding protein family. In terms of assembly, forms a complex with KhpB.

It is found in the cytoplasm. Its function is as follows. A probable RNA chaperone. Forms a complex with KhpB which binds to cellular RNA and controls its expression. Plays a role in peptidoglycan (PG) homeostasis and cell length regulation. The chain is RNA-binding protein KhpA from Bacillus subtilis (strain 168).